Consider the following 165-residue polypeptide: MITKLIPKKVFFTSGAGTHPEKLESFEAALRDACIEKFNLVTVSSILPPRCEIVTKEEGLKELSPGEIVFCVMSRISSNDPGKTLTSSVGCALPVDISKHGYISEYHAYEESAQDAGAHAVKLAESMYSTWTKEEPLKTFSIPRSSTVKDSGDWMTVISAAVFVI.

Ser-45 bears the Pyruvic acid (Ser) mark.

Belongs to the PdaD family. Pyruvate is required as a cofactor.

The catalysed reaction is L-arginine + H(+) = agmatine + CO2. The protein is Pyruvoyl-dependent arginine decarboxylase 1 (pdaD1) of Methanosarcina mazei (strain ATCC BAA-159 / DSM 3647 / Goe1 / Go1 / JCM 11833 / OCM 88) (Methanosarcina frisia).